The sequence spans 407 residues: Melanoma-associated antigen B6 (407 aa).

Residues 1-175 (MPRGHKSKLR…YDVAAEGEDE (175 aa)) are disordered. Polar residues-rich tracts occupy residues 18 to 29 (TNGQPQGLTGPQ), 57 to 71 (DASIPQESQGVSPTG), 94 to 113 (PSTSRDASVPQESQGASPTG), and 136 to 155 (PSTSHDVSVPQESQGASPTG). In terms of domain architecture, MAGE spans 195–394 (VKKKACTLAQ…GLYPHLYEDA (200 aa)).

As to expression, expressed in testis. Not expressed in other normal tissues, but is expressed in tumors of different histological origins.

This Homo sapiens (Human) protein is Melanoma-associated antigen B6 (MAGEB6).